The chain runs to 207 residues: MLVFKGKLKEHPRWEVENELYRFRNRVFSDRLGWDVESHRGLEQDSFDTPDTHWVLIEDEEGLCGCIRLLSCAKDYMLPSIFPTALAGEAPPRSNDVWELTRLAIDAERAPRLGNGISELTCIIFREVYAFAKAQGIRELVAVVSLPVERIFRRLGLPIERLGHRQAVDLGAVRGVGIRFHLDERFARAVGQPLQGAYDEARELVTE.

The protein belongs to the autoinducer synthase family.

It catalyses the reaction a fatty acyl-[ACP] + S-adenosyl-L-methionine = an N-acyl-L-homoserine lactone + S-methyl-5'-thioadenosine + holo-[ACP] + H(+). Required for the synthesis of N-butanoyl-L-homoserine lactone (BHL), an autoinducer molecule which binds to AhyR. The polypeptide is Acyl-homoserine-lactone synthase (ahyI) (Aeromonas hydrophila).